We begin with the raw amino-acid sequence, 568 residues long: Zinc finger protein 768 (568 aa).

Residues 1-16 (MEREASSWGLESRDVH) are compositionally biased toward basic and acidic residues. Disordered stretches follow at residues 1–223 (MERE…SLGV), 228–247 (SFTQGFGEQPTGALPPFDMP), and 264–287 (LNLTGTLRGPGRRGGRARGGQGPR). Phosphoserine is present on residues serine 17, serine 23, and serine 27. Threonine 35 bears the Phosphothreonine mark. Phosphoserine is present on residues serine 36, serine 65, serine 72, serine 79, serine 86, serine 93, serine 100, serine 107, serine 114, serine 121, serine 128, serine 135, and serine 149. A compositionally biased stretch (low complexity) spans 62 to 80 (EPQSPEFEPQSPEFESQSP). Positions 110–122 (SDPQSPEFESQSP) are enriched in polar residues. Tyrosine 152 carries the post-translational modification Phosphotyrosine. Phosphoserine is present on serine 154. Residues 159 to 186 (FESQSPGYESQSPGYEPQNSGDGVQNSE) show a composition bias toward polar residues. At threonine 189 the chain carries Phosphothreonine. A Phosphoserine modification is found at serine 191. A C2H2-type 1 zinc finger spans residues 289 to 311 (NICGICGKSFGRGSTLIQHQRIH). Threonine 312 is subject to Phosphothreonine. Tyrosine 317 carries the post-translational modification Phosphotyrosine. 4 consecutive C2H2-type zinc fingers follow at residues 317–339 (YKCEVCSKAFSQSSDLIKHQRTH), 345–367 (YKCPRCGKAFADSSYLLRHQRTH), 373–395 (YKCPHCGKAFGDSSYLLRHQRTH), and 401–423 (YSCPECGKCYSQNSSLRSHQRVH). 2 positions are modified to phosphoserine: serine 323 and serine 327. Threonine 424 is subject to Phosphothreonine. C2H2-type zinc fingers lie at residues 429–451 (FSCGICGKSFSQRSALIPHARSH), 457–479 (FKCPECGKRFGQSSVLAIHARTH), 485–507 (YSCPDCGKTFNRSSTLIQHQRSH), 513–535 (YRCAVCGKGFCRSSTLLQHHRVH), and 541–563 (YKCDDCGKAFSQSSDLIRHQRTH). Position 470 is a phosphoserine (serine 470).

This sequence belongs to the krueppel C2H2-type zinc-finger protein family. In terms of assembly, interacts (via zinc-finger domains) with TP53 (via N-terminus); interaction might be facilitated by TP53 oligomerization state. Interacts with ELP3. Post-translationally, may be phosphorylated at residue 'Ser-5' of the tandem heptapeptide repeats in the N-terminus. Phosphorylation might be increased upon RAS pathway activation and negatively regulate protein stability.

The protein localises to the nucleus. Its subcellular location is the chromosome. Its function is as follows. Binds to mammalian-wide interspersed repeat (MIRs) sequences in euchromatin and promoter regions of genes at the consensus sequence 5'-GCTGTGTG-[N20]-CCTCTCTG-3', consisting of two anchor regions connected by a linker region; the linker region probably does not contribute to the binding specificity. Required for cell homeostasis. May be involved in transcriptional regulation. This is Zinc finger protein 768 (Znf768) from Mus musculus (Mouse).